A 475-amino-acid chain; its full sequence is F-box/kelch-repeat protein At1g22040 (475 aa).

Residues 1-28 (MGSVMSLSCSKRKATSQDVECSSESRKR) form a disordered region. Residues 41-87 (CRLIPSLPDELSIQILARLPRICYSSVRLVSRRWRSAVSTSEVYSLR) form the F-box domain. 5 Kelch repeats span residues 94 to 140 (EEWL…KSLS), 182 to 228 (GLYV…VLNK), 229 to 279 (KLYV…AFLA), 306 to 350 (PFFV…VDGE), and 352 to 401 (YAFD…GFHG).

This is F-box/kelch-repeat protein At1g22040 from Arabidopsis thaliana (Mouse-ear cress).